The sequence spans 498 residues: ATP synthase subunit beta, chloroplastic (498 aa).

172–179 (GGAGVGKT) serves as a coordination point for ATP.

This sequence belongs to the ATPase alpha/beta chains family. F-type ATPases have 2 components, CF(1) - the catalytic core - and CF(0) - the membrane proton channel. CF(1) has five subunits: alpha(3), beta(3), gamma(1), delta(1), epsilon(1). CF(0) has four main subunits: a(1), b(1), b'(1) and c(9-12).

Its subcellular location is the plastid. The protein resides in the chloroplast thylakoid membrane. It carries out the reaction ATP + H2O + 4 H(+)(in) = ADP + phosphate + 5 H(+)(out). Functionally, produces ATP from ADP in the presence of a proton gradient across the membrane. The catalytic sites are hosted primarily by the beta subunits. This chain is ATP synthase subunit beta, chloroplastic, found in Nandina domestica (Heavenly bamboo).